We begin with the raw amino-acid sequence, 528 residues long: GMP synthase [glutamine-hydrolyzing] (528 aa).

Residues 13-204 (SILILDFGSQ…VYKISCCAAD (192 aa)) form the Glutamine amidotransferase type-1 domain. Cys90 (nucleophile) is an active-site residue. Active-site residues include His178 and Glu180. The GMPS ATP-PPase domain maps to 205–403 (WTTETYIEET…LGLPAEIIKR (199 aa)). ATP is bound at residue 232–238 (SGGVDSS).

Homodimer.

The enzyme catalyses XMP + L-glutamine + ATP + H2O = GMP + L-glutamate + AMP + diphosphate + 2 H(+). Its pathway is purine metabolism; GMP biosynthesis; GMP from XMP (L-Gln route): step 1/1. In terms of biological role, catalyzes the synthesis of GMP from XMP. The polypeptide is GMP synthase [glutamine-hydrolyzing] (Prochlorococcus marinus (strain MIT 9215)).